The sequence spans 246 residues: Probable transcriptional regulatory protein CLJ_B3338 (246 aa).

This sequence belongs to the TACO1 family.

The protein resides in the cytoplasm. This chain is Probable transcriptional regulatory protein CLJ_B3338, found in Clostridium botulinum (strain 657 / Type Ba4).